The primary structure comprises 531 residues: Probable calcium-binding mitochondrial carrier F17E5.2 (531 aa).

EF-hand domains are found at residues 70–105 (EKEK…QAHI), 106–135 (PASV…NYVI), 136–171 (AHEA…MGVN), and 172–207 (LDDQ…YPST). The Ca(2+) site is built by D83, D85, D87, S89, and D94. 5 residues coordinate Ca(2+): D149, N151, D153, E155, and E160. 3 Solcar repeats span residues 242 to 328 (GVWW…IKRW), 338 to 424 (LSTI…LKSM), and 435 to 525 (PGVL…VRKQ). 6 helical membrane-spanning segments follow: residues 248-265 (LVAG…TAPF), 303-322 (GNGI…FMCY), 348-361 (SSAG…IYPM), 399-418 (GYLP…LTVY), 441-458 (LACG…SYPL), and 500-517 (GITP…ISYV).

This sequence belongs to the mitochondrial carrier (TC 2.A.29) family.

The protein resides in the mitochondrion inner membrane. Its function is as follows. Calcium-dependent mitochondrial solute carrier. In Caenorhabditis elegans, this protein is Probable calcium-binding mitochondrial carrier F17E5.2.